Consider the following 168-residue polypeptide: Ribosome maturation factor RimM (168 aa).

The region spanning 96-168 (VDEYYWGDLI…TIRVDWQKDW (73 aa)) is the PRC barrel domain.

The protein belongs to the RimM family. In terms of assembly, binds ribosomal protein uS19.

The protein localises to the cytoplasm. An accessory protein needed during the final step in the assembly of 30S ribosomal subunit, possibly for assembly of the head region. Essential for efficient processing of 16S rRNA. May be needed both before and after RbfA during the maturation of 16S rRNA. It has affinity for free ribosomal 30S subunits but not for 70S ribosomes. The protein is Ribosome maturation factor RimM of Aromatoleum aromaticum (strain DSM 19018 / LMG 30748 / EbN1) (Azoarcus sp. (strain EbN1)).